The following is a 198-amino-acid chain: Recombination protein RecR (198 aa).

A C4-type zinc finger spans residues 58-73 (CSTCGNFTDTDPCALC). Positions 81 to 175 (STICVVEQPK…KVTRIAAGIP (95 aa)) constitute a Toprim domain.

It belongs to the RecR family.

In terms of biological role, may play a role in DNA repair. It seems to be involved in an RecBC-independent recombinational process of DNA repair. It may act with RecF and RecO. This is Recombination protein RecR from Clostridium botulinum (strain Alaska E43 / Type E3).